The following is a 632-amino-acid chain: Dihydrolipoyllysine-residue acetyltransferase component of pyruvate dehydrogenase complex, mitochondrial (632 aa).

Residues 1–77 (MWRVCARRVQ…LLGSPSRRSY (77 aa)) constitute a mitochondrion transit peptide. 2 consecutive Lipoyl-binding domains span residues 82–158 (HQKV…CITV) and 208–284 (HMQI…CIIV). Serine 91 is modified (phosphoserine). N6-lipoyllysine is present on residues lysine 123 and lysine 249. A Peripheral subunit-binding (PSBD) domain is found at 342 to 379 (FVSPLAKKLAAEKGIDLTQVKGTGPEGRIIKKDIDSFV). Residue arginine 446 coordinates CoA. N6-acetyllysine is present on lysine 451. Position 458 is an N6-succinyllysine (lysine 458). Serine 460 serves as a coordination point for CoA. Lysine 532 is modified (N6-succinyllysine). 3 residues coordinate CoA: serine 551, asparagine 552, and glycine 576. Catalysis depends on residues histidine 605 and aspartate 609.

The protein belongs to the 2-oxoacid dehydrogenase family. Part of the pyruvate dehydrogenase complex (PDHc) that is a multi-enzyme complex composed of multiple copies of three enzymes, pyruvate dehydrogenase (subunits PDH1A and PDHB, E1 component), dihydrolipoamide acetyltransferase (DLAT, E2 component), and dihydrolipoamide dehydrogenase (DLD, E3 component) to which is added an additional protein the E3-binding protein (PDHX, E3BP). In terms of structural architecture, the E2 and E3BP components assemble into a 60meric central core with icosahedral symmetry. The central core is decorated with E1 and E3 proteins. Currently, two alternative models for the E2:E3BP stoichiometry are considered as being either 48:12 (E2(48)-E3BP(12)) or 40:20 (E2(40)-E3BP(20)). Interacts with PDK2 and PDK3. Interacts with SIRT4. Interacts with PDHB. Requires (R)-lipoate as cofactor. Post-translationally, delipoylated at Lys-123 and Lys-249 by SIRT4, delipoylation decreases the PHD complex activity. In terms of tissue distribution, expressed in flagella of epididymal sperm.

It is found in the mitochondrion matrix. It catalyses the reaction N(6)-[(R)-dihydrolipoyl]-L-lysyl-[protein] + acetyl-CoA = N(6)-[(R)-S(8)-acetyldihydrolipoyl]-L-lysyl-[protein] + CoA. Its function is as follows. As part of the pyruvate dehydrogenase complex, catalyzes the transfers of an acetyl group to a lipoic acid moiety. The pyruvate dehydrogenase complex, catalyzes the overall conversion of pyruvate to acetyl-CoA and CO(2), and thereby links cytoplasmic glycolysis and the mitochondrial tricarboxylic acid (TCA) cycle. In Rattus norvegicus (Rat), this protein is Dihydrolipoyllysine-residue acetyltransferase component of pyruvate dehydrogenase complex, mitochondrial.